The primary structure comprises 66 residues: Protein I177L (66 aa).

It belongs to the asfivirus I177L family.

It localises to the virion. The sequence is that of Protein I177L from African swine fever virus (isolate Tick/Malawi/Lil 20-1/1983) (ASFV).